The chain runs to 1027 residues: uncharacterized protein (1027 aa).

This is an uncharacterized protein from Colorado tick fever virus (strain USA/Florio N-7180) (CTFV).